A 228-amino-acid chain; its full sequence is Phosphoglycolate phosphatase (228 aa).

D12 acts as the Nucleophile in catalysis. Mg(2+)-binding residues include D12, D14, and D177.

It belongs to the HAD-like hydrolase superfamily. CbbY/CbbZ/Gph/YieH family. Requires Mg(2+) as cofactor.

The catalysed reaction is 2-phosphoglycolate + H2O = glycolate + phosphate. Its pathway is organic acid metabolism; glycolate biosynthesis; glycolate from 2-phosphoglycolate: step 1/1. Functionally, specifically catalyzes the dephosphorylation of 2-phosphoglycolate. Is involved in the dissimilation of the intracellular 2-phosphoglycolate formed during the DNA repair of 3'-phosphoglycolate ends, a major class of DNA lesions induced by oxidative stress. This Vibrio vulnificus (strain YJ016) protein is Phosphoglycolate phosphatase.